We begin with the raw amino-acid sequence, 407 residues long: MPGHLQEGFGCVVTNRFDQLFDDESDPFEVLKAAENKKKEAGGGGVGGPGAKSAAQAAAQTNSNAAGKQLRKESQKDRKNPLPPNVGVVDKKEETQPPVALKKEGIRRVGRRPDQQLQGEGKIIDRRPERRPPRERRFEKPLEEKGEGGEFSVDRPIIDRPIRGRGGLGRGRGGRGRGMGRGDGFDSRGKREFDRHSGSDRSSFSHYSGLKHEDKRGGSGSHNWGTVKDELTESPKYIQKQISYNCSDLDQSNVTEETPEGEEHPVADTENKENEVEEVKEEGPKEMTLDEWKAIQNKDRAKVEFNIRKPNEGADGQWKKGFVLHKSKSEEAHAEDSVMDHHFRKPANDITSQLEINFGDLGRPGRGGRGGRGGRGRGGRPNRGSRTDKSSASAPDVDDPEAFPALA.

Residue Ser25 is modified to Phosphoserine. The disordered stretch occupies residues 33–227; sequence AAENKKKEAG…GSGSHNWGTV (195 aa). Residues 51-68 are compositionally biased toward low complexity; the sequence is AKSAAQAAAQTNSNAAGK. Lys52 is subject to N6-acetyllysine; alternate. A Glycyl lysine isopeptide (Lys-Gly) (interchain with G-Cter in SUMO1); alternate cross-link involves residue Lys52. An N6-acetyllysine modification is found at Lys68. Basic and acidic residues-rich tracts occupy residues 70–80, 89–114, and 122–162; these read LRKESQKDRKN, VDKK…RRPD, and KIID…DRPI. Residue Lys102 forms a Glycyl lysine isopeptide (Lys-Gly) (interchain with G-Cter in SUMO1); alternate linkage. Lys102 is covalently cross-linked (Glycyl lysine isopeptide (Lys-Gly) (interchain with G-Cter in SUMO2)). Lys102 is covalently cross-linked (Glycyl lysine isopeptide (Lys-Gly) (interchain with G-Cter in SUMO2); alternate). N6-acetyllysine is present on residues Lys122 and Lys140. The span at 164–182 shows a compositional bias: gly residues; that stretch reads GRGGLGRGRGGRGRGMGRG. Arg165 and Arg188 each carry omega-N-methylarginine. Residues 183–199 show a composition bias toward basic and acidic residues; that stretch reads DGFDSRGKREFDRHSGS. A phosphoserine mark is found at Ser197, Ser199, Ser203, Ser205, and Ser208. Lys211 carries the N6-acetyllysine; alternate modification. Residue Lys211 forms a Glycyl lysine isopeptide (Lys-Gly) (interchain with G-Cter in SUMO2); alternate linkage. Residue Arg216 is modified to Omega-N-methylarginine. Ser221 bears the Phosphoserine mark. Thr226 bears the Phosphothreonine mark. Lys228 participates in a covalent cross-link: Glycyl lysine isopeptide (Lys-Gly) (interchain with G-Cter in SUMO1); alternate. Residue Lys228 forms a Glycyl lysine isopeptide (Lys-Gly) (interchain with G-Cter in SUMO2); alternate linkage. Ser234 is modified (phosphoserine). Over residues 242–256 the composition is skewed to polar residues; the sequence is ISYNCSDLDQSNVTE. Disordered regions lie at residues 242–291 and 327–407; these read ISYN…TLDE and SKSE…PALA. Positions 261 to 274 are enriched in basic and acidic residues; the sequence is GEEHPVADTENKEN. Lys280 is covalently cross-linked (Glycyl lysine isopeptide (Lys-Gly) (interchain with G-Cter in SUMO1); alternate). Lys280 is covalently cross-linked (Glycyl lysine isopeptide (Lys-Gly) (interchain with G-Cter in SUMO2)). Residue Lys280 forms a Glycyl lysine isopeptide (Lys-Gly) (interchain with G-Cter in SUMO2); alternate linkage. Basic and acidic residues-rich tracts occupy residues 281–291 and 327–341; these read EEGPKEMTLDE and SKSE…VMDH. At Lys328 the chain carries N6-acetyllysine. Residue Ser329 is modified to Phosphoserine. Residues 362 to 371 show a composition bias toward gly residues; sequence GRPGRGGRGG. Omega-N-methylarginine occurs at positions 363, 366, and 369. 2 positions are modified to phosphoserine: Ser391 and Ser393.

The protein belongs to the SERBP1-HABP4 family. In terms of assembly, associates with mature 80S ribosomes. Interacts with EEF2/eEF2; interaction sequesters EEF2/eEF2 at the A-site of the ribosome, thereby blocking the interaction sites of the mRNA-tRNA complex, promoting ribosome stabilization and hibernation. Interacts with SPIN1. Interacts with CHD3 and TDRD3. Interacts with ZDHHC17 (via ANK repeats). Phosphorylation by MTOR inhibits SERBP1 and relieves ribosome hibernation.

Its function is as follows. Ribosome-binding protein that promotes ribosome hibernation, a process during which ribosomes are stabilized in an inactive state and preserved from proteasomal degradation. Acts via its association with EEF2/eEF2 factor, sequestering EEF2/eEF2 at the A-site of the ribosome and promoting ribosome stabilization and storage in an inactive state. May also play a role in the regulation of mRNA stability: binds to the 3'-most 134 nt of the SERPINE1/PAI1 mRNA, a region which confers cyclic nucleotide regulation of message decay. Seems to play a role in PML-nuclear bodies formation. The chain is SERPINE1 mRNA-binding protein 1 from Oryctolagus cuniculus (Rabbit).